The following is a 205-amino-acid chain: Guanylyl cyclase-activating protein 1 (205 aa).

G2 carries the N-myristoyl glycine lipid modification. N3 is modified (deamidated asparagine). EF-hand domains follow at residues 30–48 (SGQL…KNLS), 50–85 (ASNQ…VLKG), 86–121 (KVEQ…IRAI), and 129–164 (TAEE…DELL). The Ca(2+) site is built by D63, N65, D67, Y69, E74, D99, D101, N103, C105, E110, D142, N144, D146, E148, and E153.

In terms of tissue distribution, retina.

Regulatory protein that inhibits guanylyl cyclase when free calcium ions concentration is elevated. This Ca(2+)-sensitive regulation of retinal guanylyl cyclase is a key event in recovery of the dark state of rod photoreceptors following light exposure. This chain is Guanylyl cyclase-activating protein 1 (GUCA1A), found in Lithobates pipiens (Northern leopard frog).